Here is a 338-residue protein sequence, read N- to C-terminus: Nicotinate-nucleotide--dimethylbenzimidazole phosphoribosyltransferase (338 aa).

Residue E305 is the Proton acceptor of the active site.

Belongs to the CobT family.

The catalysed reaction is 5,6-dimethylbenzimidazole + nicotinate beta-D-ribonucleotide = alpha-ribazole 5'-phosphate + nicotinate + H(+). Its pathway is nucleoside biosynthesis; alpha-ribazole biosynthesis; alpha-ribazole from 5,6-dimethylbenzimidazole: step 1/2. In terms of biological role, catalyzes the synthesis of alpha-ribazole-5'-phosphate from nicotinate mononucleotide (NAMN) and 5,6-dimethylbenzimidazole (DMB). This Rhizobium johnstonii (strain DSM 114642 / LMG 32736 / 3841) (Rhizobium leguminosarum bv. viciae) protein is Nicotinate-nucleotide--dimethylbenzimidazole phosphoribosyltransferase.